The primary structure comprises 226 residues: Biosynthetic peptidoglycan transglycosylase (226 aa).

A helical membrane pass occupies residues 10–30; that stretch reads IIMTLLALLILPYLLIPVYAL.

Belongs to the glycosyltransferase 51 family.

The protein localises to the cell inner membrane. It catalyses the reaction [GlcNAc-(1-&gt;4)-Mur2Ac(oyl-L-Ala-gamma-D-Glu-L-Lys-D-Ala-D-Ala)](n)-di-trans,octa-cis-undecaprenyl diphosphate + beta-D-GlcNAc-(1-&gt;4)-Mur2Ac(oyl-L-Ala-gamma-D-Glu-L-Lys-D-Ala-D-Ala)-di-trans,octa-cis-undecaprenyl diphosphate = [GlcNAc-(1-&gt;4)-Mur2Ac(oyl-L-Ala-gamma-D-Glu-L-Lys-D-Ala-D-Ala)](n+1)-di-trans,octa-cis-undecaprenyl diphosphate + di-trans,octa-cis-undecaprenyl diphosphate + H(+). Its pathway is cell wall biogenesis; peptidoglycan biosynthesis. Peptidoglycan polymerase that catalyzes glycan chain elongation from lipid-linked precursors. In Agrobacterium fabrum (strain C58 / ATCC 33970) (Agrobacterium tumefaciens (strain C58)), this protein is Biosynthetic peptidoglycan transglycosylase.